A 125-amino-acid polypeptide reads, in one-letter code: Large ribosomal subunit protein bL12 (125 aa).

It belongs to the bacterial ribosomal protein bL12 family. Homodimer. Part of the ribosomal stalk of the 50S ribosomal subunit. Forms a multimeric L10(L12)X complex, where L10 forms an elongated spine to which 2 to 4 L12 dimers bind in a sequential fashion. Binds GTP-bound translation factors.

In terms of biological role, forms part of the ribosomal stalk which helps the ribosome interact with GTP-bound translation factors. Is thus essential for accurate translation. This is Large ribosomal subunit protein bL12 from Variovorax paradoxus (strain S110).